Here is a 215-residue protein sequence, read N- to C-terminus: RNA pyrophosphohydrolase (215 aa).

A Nudix hydrolase domain is found at 6–149 (GFRPNVGIIL…KRDVYQLALT (144 aa)). Positions 38–59 (GGIKYGETPMQAMYRELHEETG) match the Nudix box motif.

The protein belongs to the Nudix hydrolase family. RppH subfamily. A divalent metal cation serves as cofactor.

Functionally, accelerates the degradation of transcripts by removing pyrophosphate from the 5'-end of triphosphorylated RNA, leading to a more labile monophosphorylated state that can stimulate subsequent ribonuclease cleavage. This chain is RNA pyrophosphohydrolase, found in Burkholderia multivorans (strain ATCC 17616 / 249).